The chain runs to 478 residues: MKLNKEENFSEWFDTVLRESGLYDYGRYPVKGMGVWPPFGFKLRKLVLNIIRDLLDSTGHEEVLFPVLIPKTLLEKESEHIRGFEGEVFWVTKGGHEDLDVPLALRPTSETAISYMESFWISSYKQLPMKLYQIVPVYRYETKATRPLIRLREVSTFKEAHTAHESFEGADSQCAEAIEIYKKVFDRLGIPYMISQRPPWDKFAGALYTVAFDTVMPDGRVLQIGTVHHLGQNFSVPFEVRFHTEDGDKDYVWQTSYGLSDRVIASLVAVHGDERGLVLPPEVAPVQVVIVPIPQKEEEQQRKVLEEAKRVEEELKARGWRTVLDDRDELTPGAKYYEWELKGVPFRIEIGKKEVEGDELTVARRDLKKRVKVKKGEIHQRLKEMSDDMLNNMRERAWSFMKSRIKRVRSLEEAKELVEKRYVVELPWCGSKECGLRVDEEVGRVLGVPLDEDAEAKGERCAVCGREAKWWIRVAKTY.

Belongs to the class-II aminoacyl-tRNA synthetase family. ProS type 3 subfamily. As to quaternary structure, homodimer.

It is found in the cytoplasm. The enzyme catalyses tRNA(Pro) + L-proline + ATP = L-prolyl-tRNA(Pro) + AMP + diphosphate. In terms of biological role, catalyzes the attachment of proline to tRNA(Pro) in a two-step reaction: proline is first activated by ATP to form Pro-AMP and then transferred to the acceptor end of tRNA(Pro). The protein is Proline--tRNA ligase of Ignicoccus hospitalis (strain KIN4/I / DSM 18386 / JCM 14125).